Reading from the N-terminus, the 553-residue chain is Retrotransposon Gag-like protein 3 (553 aa).

The stretch at 2-43 (VEDLAASYVTLKLENEILQAQVKRLMEENAALQAQIPELQKS) forms a coiled coil. 2 disordered regions span residues 38 to 274 (PELQ…PLDP) and 474 to 514 (SGGV…EAER). The segment covering 45 to 57 (AVKEHEPLRKPSE) has biased composition (basic and acidic residues). Residues 58 to 73 (AQEPPESPEFPAARES) show a composition bias toward low complexity. Basic and acidic residues predominate over residues 87-113 (EPTKIREPREPSAISELREPPEIKEPQ). Residues 118–127 (TNESGESSAI) show a composition bias toward polar residues. Residues 132–147 (GSPEIKEPHLPPKSKE) are compositionally biased toward basic and acidic residues. Positions 239-250 (QTVPEYQETSSQ) are enriched in polar residues. Residues 474–483 (SGGVDSSSSS) show a composition bias toward low complexity. A compositionally biased stretch (polar residues) spans 495–507 (TENQPVQATSNRP). Residues 523 to 537 (CLYCGHPGHFARDCP) form a CCHC-type zinc finger.

As to expression, expressed in embryonic myogenic progenitor cells, not expressed in adult and aged satellite cells.

It is found in the nucleus. Functionally, may function as a transcriptional regulator. Plays a role in postnatal myogenesis, may be involved in the regulation of satellite cells self-renewal. In Mus musculus (Mouse), this protein is Retrotransposon Gag-like protein 3.